A 72-amino-acid chain; its full sequence is Translation initiation factor IF-1 (72 aa).

The S1-like domain maps to 1 to 72 (MAKDDVIVVD…DKGRITHRYK (72 aa)).

This sequence belongs to the IF-1 family. In terms of assembly, component of the 30S ribosomal translation pre-initiation complex which assembles on the 30S ribosome in the order IF-2 and IF-3, IF-1 and N-formylmethionyl-tRNA(fMet); mRNA recruitment can occur at any time during PIC assembly.

Its subcellular location is the cytoplasm. In terms of biological role, one of the essential components for the initiation of protein synthesis. Stabilizes the binding of IF-2 and IF-3 on the 30S subunit to which N-formylmethionyl-tRNA(fMet) subsequently binds. Helps modulate mRNA selection, yielding the 30S pre-initiation complex (PIC). Upon addition of the 50S ribosomal subunit IF-1, IF-2 and IF-3 are released leaving the mature 70S translation initiation complex. This Aliarcobacter butzleri (strain RM4018) (Arcobacter butzleri) protein is Translation initiation factor IF-1.